The following is a 397-amino-acid chain: DnaJ homolog subfamily A member 1 (397 aa).

A J domain is found at 6-68 (TYYDVLGVKP…KKRELYDKGG (63 aa)). Position 66 is an N6-acetyllysine (lysine 66). Residue serine 83 is modified to Phosphoserine. A CR-type zinc finger spans residues 121–205 (GATRKLALQK…CNGRKIVREK (85 aa)). Cysteine 134, cysteine 137, cysteine 150, cysteine 153, cysteine 177, cysteine 180, cysteine 193, and cysteine 196 together coordinate Zn(2+). CXXCXGXG motif repeat units lie at residues 134 to 141 (CDKCEGRG), 150 to 157 (CPNCRGTG), 177 to 184 (CMECQGHG), and 193 to 200 (CKSCNGRK). Phosphoserine is present on serine 335. The segment at 352–397 (VEETDEMDQVELVDFDPNQERRRHYNGEAYEDDEHHPRGGVQCQTS) is disordered. A compositionally biased stretch (acidic residues) spans 353 to 365 (EETDEMDQVELVD). Position 381 is a phosphotyrosine (tyrosine 381). At cysteine 394 the chain carries Cysteine methyl ester. Cysteine 394 carries S-farnesyl cysteine lipidation. The propeptide at 395-397 (QTS) is removed in mature form.

As to quaternary structure, identified in a complex with HSPA1B and BAX. Interacts with RNF207.

The protein resides in the membrane. Its subcellular location is the cytoplasm. The protein localises to the microsome. It localises to the mitochondrion. It is found in the nucleus. The protein resides in the perinuclear region. Co-chaperone for HSPA8/Hsc70. Plays a role in protein transport into mitochondria via its role as co-chaperone. Functions as co-chaperone for HSPA1B and negatively regulates the translocation of BAX from the cytosol to mitochondria in response to cellular stress, thereby protecting cells against apoptosis. Stimulates ATP hydrolysis, but not the folding of unfolded proteins mediated by HSPA1A (in vitro). Promotes apoptosis in response to cellular stress mediated by exposure to anisomycin or UV. This chain is DnaJ homolog subfamily A member 1 (DNAJA1), found in Chlorocebus aethiops (Green monkey).